The sequence spans 370 residues: DNA replication and repair protein RecF (370 aa).

30–37 (GENAQGKT) is a binding site for ATP.

Belongs to the RecF family.

The protein resides in the cytoplasm. In terms of biological role, the RecF protein is involved in DNA metabolism; it is required for DNA replication and normal SOS inducibility. RecF binds preferentially to single-stranded, linear DNA. It also seems to bind ATP. This is DNA replication and repair protein RecF from Staphylococcus carnosus (strain TM300).